A 119-amino-acid chain; its full sequence is Basic phospholipase A2 taipoxin alpha chain (119 aa).

7 disulfides stabilise this stretch: C11/C72, C27/C118, C29/C45, C44/C99, C51/C92, C61/C85, and C79/C90. Ca(2+)-binding residues include Y28, G30, and G32. H48 is an active-site residue. D49 is a binding site for Ca(2+). D93 is an active-site residue.

The protein belongs to the phospholipase A2 family. Group I subfamily. D49 sub-subfamily. As to quaternary structure, heterotrimer of alpha, beta, and gamma chains; non-covalently linked. The cofactor is Ca(2+). As to expression, expressed by the venom gland.

It localises to the secreted. It carries out the reaction a 1,2-diacyl-sn-glycero-3-phosphocholine + H2O = a 1-acyl-sn-glycero-3-phosphocholine + a fatty acid + H(+). Functionally, heterotrimer: Snake venom phospholipase A2 (PLA2) heterotrimer that acts as a potent presynaptic neurotoxin by blocking synaptic transmission and synaptic vesicle recycling. May act by binding in a calcium-dependent fashion to neurotonal pentraxin-1 (NPTX1) and neurotonal pentraxin-2 (NPTX2), but not to neuronal pentraxin receptor (NPTXR). Also binds to taipoxin-associated calcium binding protein 49 (RCN2), a protein localized in the lumen of endoplasmic reticulum. Its function is as follows. Monomer (alpha chain): Snake venom phospholipase A2 (PLA2) alpha chain that possesses the same high enzymatic activity as the heterotrimer. PLA2 catalyzes the calcium-dependent hydrolysis of the 2-acyl groups in 3-sn-phosphoglycerides. This Oxyuranus scutellatus scutellatus (Australian taipan) protein is Basic phospholipase A2 taipoxin alpha chain.